The following is a 284-amino-acid chain: SF-assemblin (284 aa).

Positions Pro1 to Gly30 are disordered. The segment at Pro1–Ile38 is nonhelical region. The span at Ser17–Gly30 shows a compositional bias: low complexity. Residues Ser39–Ser284 form a rod region. Coiled coils occupy residues Glu56–Val102 and Leu239–Asn268.

It belongs to the SF-assemblin family. Post-translationally, consists of at least four isoforms including two phosphorylated.

The protein resides in the cytoplasm. It is found in the cytoskeleton. Major component of the striated microtubule-associated fibers (SMAFs; system-I-fibers). The sequence is that of SF-assemblin from Spermatozopsis similis (Green alga).